Consider the following 309-residue polypeptide: Methionyl-tRNA formyltransferase (309 aa).

107 to 110 (SLLP) provides a ligand contact to (6S)-5,6,7,8-tetrahydrofolate.

This sequence belongs to the Fmt family.

It catalyses the reaction L-methionyl-tRNA(fMet) + (6R)-10-formyltetrahydrofolate = N-formyl-L-methionyl-tRNA(fMet) + (6S)-5,6,7,8-tetrahydrofolate + H(+). Attaches a formyl group to the free amino group of methionyl-tRNA(fMet). The formyl group appears to play a dual role in the initiator identity of N-formylmethionyl-tRNA by promoting its recognition by IF2 and preventing the misappropriation of this tRNA by the elongation apparatus. The polypeptide is Methionyl-tRNA formyltransferase (Borrelia duttonii (strain Ly)).